Here is a 289-residue protein sequence, read N- to C-terminus: N-acetylmuramoyl-L-alanine amidase AmiA (289 aa).

A signal peptide (tat-type signal) is located at residues 1-34 (MSTFKPLKTLTSRRQVLKAGLAALTLSGMSQAIA). The interval 39–63 (LKTSNGHSKPKAKKSGGKRVVVLDP) is disordered. Basic residues predominate over residues 46–55 (SKPKAKKSGG). Positions 59–273 (VVLDPGHGGI…IATAIAEGVI (215 aa)) constitute a MurNAc-LAA domain.

It belongs to the N-acetylmuramoyl-L-alanine amidase 3 family. Post-translationally, exported by the Tat system. The position of the signal peptide cleavage has not been experimentally proven. Can also be exported by the Sec system.

The protein localises to the periplasm. It catalyses the reaction Hydrolyzes the link between N-acetylmuramoyl residues and L-amino acid residues in certain cell-wall glycopeptides.. Cell-wall hydrolase involved in septum cleavage during cell division. Can also act as powerful autolysin in the presence of murein synthesis inhibitors. The sequence is that of N-acetylmuramoyl-L-alanine amidase AmiA (amiA) from Escherichia coli (strain K12).